Reading from the N-terminus, the 491-residue chain is Cytochrome P450 2B9 (491 aa).

A Phosphoserine; by PKA modification is found at S128. C436 is a binding site for heme.

It belongs to the cytochrome P450 family. The cofactor is heme.

The protein resides in the endoplasmic reticulum membrane. Its subcellular location is the microsome membrane. The catalysed reaction is an organic molecule + reduced [NADPH--hemoprotein reductase] + O2 = an alcohol + oxidized [NADPH--hemoprotein reductase] + H2O + H(+). Functionally, cytochromes P450 are a group of heme-thiolate monooxygenases. In liver microsomes, this enzyme is involved in an NADPH-dependent electron transport pathway. It oxidizes a variety of structurally unrelated compounds, including steroids, fatty acids, and xenobiotics. This chain is Cytochrome P450 2B9 (Cyp2b9), found in Mus musculus (Mouse).